A 256-amino-acid polypeptide reads, in one-letter code: Triosephosphate isomerase (256 aa).

10-12 (NWK) contacts substrate. His-99 functions as the Electrophile in the catalytic mechanism. Glu-171 (proton acceptor) is an active-site residue. Substrate-binding positions include Gly-177, Ser-216, and 237–238 (GG).

The protein belongs to the triosephosphate isomerase family. In terms of assembly, homodimer.

It is found in the cytoplasm. It carries out the reaction D-glyceraldehyde 3-phosphate = dihydroxyacetone phosphate. Its pathway is carbohydrate biosynthesis; gluconeogenesis. The protein operates within carbohydrate degradation; glycolysis; D-glyceraldehyde 3-phosphate from glycerone phosphate: step 1/1. Functionally, involved in the gluconeogenesis. Catalyzes stereospecifically the conversion of dihydroxyacetone phosphate (DHAP) to D-glyceraldehyde-3-phosphate (G3P). This Colwellia psychrerythraea (strain 34H / ATCC BAA-681) (Vibrio psychroerythus) protein is Triosephosphate isomerase.